A 271-amino-acid chain; its full sequence is 3-methyl-2-oxobutanoate hydroxymethyltransferase (271 aa).

Residues Asp-42 and Asp-86 each contribute to the Mg(2+) site. 3-methyl-2-oxobutanoate is bound by residues 42-43 (DS), Asp-86, and Lys-116. Glu-118 is a Mg(2+) binding site. Catalysis depends on Glu-185, which acts as the Proton acceptor.

Belongs to the PanB family. As to quaternary structure, homodecamer; pentamer of dimers. Mg(2+) serves as cofactor.

It localises to the cytoplasm. It catalyses the reaction 3-methyl-2-oxobutanoate + (6R)-5,10-methylene-5,6,7,8-tetrahydrofolate + H2O = 2-dehydropantoate + (6S)-5,6,7,8-tetrahydrofolate. It participates in cofactor biosynthesis; (R)-pantothenate biosynthesis; (R)-pantoate from 3-methyl-2-oxobutanoate: step 1/2. Catalyzes the reversible reaction in which hydroxymethyl group from 5,10-methylenetetrahydrofolate is transferred onto alpha-ketoisovalerate to form ketopantoate. This chain is 3-methyl-2-oxobutanoate hydroxymethyltransferase, found in Synechococcus sp. (strain CC9605).